The primary structure comprises 368 residues: Protein-glutamate methylesterase/protein-glutamine glutaminase (368 aa).

The Response regulatory domain maps to 9–126 (KVLVVDDSAF…SINMKELKDE (118 aa)). 4-aspartylphosphate is present on D60. The CheB-type methylesterase domain occupies 161 to 354 (SVPARIAVAI…ETVVKAVEII (194 aa)). Active-site residues include S173, H200, and D296.

Belongs to the CheB family. Post-translationally, phosphorylated by CheA. Phosphorylation of the N-terminal regulatory domain activates the methylesterase activity.

Its subcellular location is the cytoplasm. The enzyme catalyses [protein]-L-glutamate 5-O-methyl ester + H2O = L-glutamyl-[protein] + methanol + H(+). It catalyses the reaction L-glutaminyl-[protein] + H2O = L-glutamyl-[protein] + NH4(+). Involved in chemotaxis. Part of a chemotaxis signal transduction system that modulates chemotaxis in response to various stimuli. Catalyzes the demethylation of specific methylglutamate residues introduced into the chemoreceptors (methyl-accepting chemotaxis proteins or MCP) by CheR. Also mediates the irreversible deamidation of specific glutamine residues to glutamic acid. The sequence is that of Protein-glutamate methylesterase/protein-glutamine glutaminase from Pyrococcus horikoshii (strain ATCC 700860 / DSM 12428 / JCM 9974 / NBRC 100139 / OT-3).